A 429-amino-acid polypeptide reads, in one-letter code: Adenylosuccinate synthetase (429 aa).

GTP is bound by residues 12-18 (GDEGKGK) and 40-42 (GHT). D13 functions as the Proton acceptor in the catalytic mechanism. Residues D13 and G40 each coordinate Mg(2+). IMP is bound by residues 13–16 (DEGK), 38–41 (NAGH), T128, R142, Q223, T238, and R302. Catalysis depends on H41, which acts as the Proton donor. Residue 298–304 (TTTGRAR) coordinates substrate. Residues R304, 330 to 332 (SID), and 412 to 414 (SVG) each bind GTP.

It belongs to the adenylosuccinate synthetase family. In terms of assembly, homodimer. Requires Mg(2+) as cofactor.

It is found in the cytoplasm. It catalyses the reaction IMP + L-aspartate + GTP = N(6)-(1,2-dicarboxyethyl)-AMP + GDP + phosphate + 2 H(+). It functions in the pathway purine metabolism; AMP biosynthesis via de novo pathway; AMP from IMP: step 1/2. Functionally, plays an important role in the de novo pathway of purine nucleotide biosynthesis. Catalyzes the first committed step in the biosynthesis of AMP from IMP. This is Adenylosuccinate synthetase from Oceanobacillus iheyensis (strain DSM 14371 / CIP 107618 / JCM 11309 / KCTC 3954 / HTE831).